The primary structure comprises 218 residues: Large ribosomal subunit protein mL54 (218 aa).

This sequence belongs to the mitochondrion-specific ribosomal protein mL54 family. In terms of assembly, component of the mitochondrial large ribosomal subunit (mt-LSU). Mature N.crassa 74S mitochondrial ribosomes consist of a small (37S) and a large (54S) subunit. The 37S small subunit contains a 16S ribosomal RNA (16S mt-rRNA) and 32 different proteins. The 54S large subunit contains a 23S rRNA (23S mt-rRNA) and 42 different proteins.

The protein localises to the mitochondrion. Functionally, component of the mitochondrial ribosome (mitoribosome), a dedicated translation machinery responsible for the synthesis of mitochondrial genome-encoded proteins, including at least some of the essential transmembrane subunits of the mitochondrial respiratory chain. The mitoribosomes are attached to the mitochondrial inner membrane and translation products are cotranslationally integrated into the membrane. This chain is Large ribosomal subunit protein mL54 (mrpl37), found in Neurospora crassa (strain ATCC 24698 / 74-OR23-1A / CBS 708.71 / DSM 1257 / FGSC 987).